Here is a 1237-residue protein sequence, read N- to C-terminus: Clustered mitochondria protein homolog (1237 aa).

The 245-residue stretch at 291–535 (DITRSQENCL…RITPLDVAWS (245 aa)) folds into the Clu domain. 2 stretches are compositionally biased toward basic and acidic residues: residues 575-597 (RKTAKREAEKTKAVEAQNEDKAE) and 845-854 (SQIKSQEHSP). 2 disordered regions span residues 575–614 (RKTAKREAEKTKAVEAQNEDKAELLSTSDPGEGENKAVAS) and 845–886 (SQIK…VAAS). TPR repeat units lie at residues 957–990 (AKLYHQLSMLYYQTDEKEAAVELARKAVIVTERT), 999–1032 (ILSYLNLSLFEHASGNTHTALIYIRHALELWKII), and 1041–1074 (ITTMNNAAVMLQHLKKYPDSRKWFEASLTVCEGL). 2 disordered regions span residues 1152-1189 (RLRRTNLSPRMTIGTKPQPQVGQNAPATTNGATSKSIG) and 1201-1237 (FIEGGGESRSPRSKQKKRAAASNPKLRGSKQSTVQTA). Positions 1156–1187 (TNLSPRMTIGTKPQPQVGQNAPATTNGATSKS) are enriched in polar residues.

It belongs to the CLU family. In terms of assembly, may associate with the eukaryotic translation initiation factor 3 (eIF-3) complex.

It is found in the cytoplasm. In terms of biological role, mRNA-binding protein involved in proper cytoplasmic distribution of mitochondria. The chain is Clustered mitochondria protein homolog from Ajellomyces capsulatus (strain NAm1 / WU24) (Darling's disease fungus).